The following is a 250-amino-acid chain: MSGHSKWATIKRKKAATDQKRGNLFTKLVKEITIAAKMGGGDPTGNPRLRLAIDTARSNSMPMDNIQRAIKKGTGELDGVSWDEITYEGYGPAGIALIIETATDNRNRTVADLRHIMSRNNGSLGESGSVAWMFQRKGSLDVPHSAVSEEQLMELLLDAGLEDLDQDDENYFTVITDIKDLESAKKALDEAGIAYENAKIDLIPDNYIELDADDAAKVMKLIDALESNDDVQAVYSNMELSESAMNSLSE.

This sequence belongs to the TACO1 family.

It is found in the cytoplasm. The polypeptide is Probable transcriptional regulatory protein Cag_0165 (Chlorobium chlorochromatii (strain CaD3)).